The sequence spans 178 residues: Major urinary protein 4 (178 aa).

A signal peptide spans 1-16; the sequence is MKLLLCLGLTLVCIHA. Residues C80 and C173 are joined by a disulfide bond.

This sequence belongs to the calycin superfamily. Lipocalin family. Expressed in lacrimal gland, parotid gland, sublingual gland, nasal mucus, and vomeronasal organ.

It localises to the secreted. In terms of biological role, binds pheromones, likely to displace pheromones complexed to urinary MUPs and transport them to the vomeronasal organ (VNO) where they associate with their neuronal receptor(s). MUP4 is highly specific for the male mouse pheromone 2-sec-butyl-4,5-dihydrothiazole (SBT). In Mus musculus (Mouse), this protein is Major urinary protein 4 (Mup4).